The sequence spans 300 residues: Glutamyl-Q tRNA(Asp) synthetase (300 aa).

Residues 14-18 and Glu50 contribute to the L-glutamate site; that span reads RFAPT. A 'HIGH' region motif is present at residues 17-27; the sequence is PTPSGFLHFGS. The Zn(2+) site is built by Cys106, Cys108, Tyr120, and Cys124. Tyr177 and Arg195 together coordinate L-glutamate. A 'KMSKS' region motif is present at residues 233–237; the sequence is KLGKS. Lys236 is a binding site for ATP.

It belongs to the class-I aminoacyl-tRNA synthetase family. GluQ subfamily. It depends on Zn(2+) as a cofactor.

Its function is as follows. Catalyzes the tRNA-independent activation of glutamate in presence of ATP and the subsequent transfer of glutamate onto a tRNA(Asp). Glutamate is transferred on the 2-amino-5-(4,5-dihydroxy-2-cyclopenten-1-yl) moiety of the queuosine in the wobble position of the QUC anticodon. The sequence is that of Glutamyl-Q tRNA(Asp) synthetase from Pseudomonas putida (strain ATCC 47054 / DSM 6125 / CFBP 8728 / NCIMB 11950 / KT2440).